The sequence spans 347 residues: Phosphoribosylformylglycinamidine cyclo-ligase (347 aa).

It belongs to the AIR synthase family.

Its subcellular location is the cytoplasm. The enzyme catalyses 2-formamido-N(1)-(5-O-phospho-beta-D-ribosyl)acetamidine + ATP = 5-amino-1-(5-phospho-beta-D-ribosyl)imidazole + ADP + phosphate + H(+). The protein operates within purine metabolism; IMP biosynthesis via de novo pathway; 5-amino-1-(5-phospho-D-ribosyl)imidazole from N(2)-formyl-N(1)-(5-phospho-D-ribosyl)glycinamide: step 2/2. In Prochlorococcus marinus subsp. pastoris (strain CCMP1986 / NIES-2087 / MED4), this protein is Phosphoribosylformylglycinamidine cyclo-ligase.